The chain runs to 398 residues: Potassium channel subfamily K member 4 (398 aa).

Over 1–3 (MRS) the chain is Cytoplasmic. Residues 4-24 (TTLLALLALVLLYLVSGALVF) form a helical membrane-spanning segment. Residues 25-88 (QALEQPHEQQ…WTNSSNHSSA (64 aa)) are Extracellular-facing. Asn81 and Asn84 each carry an N-linked (GlcNAc...) asparagine glycan. An intramembrane region (helical) is located at residues 89-103 (WNLGSAFFFSGTIIT). Thr104, Ile105, Gly106, and Tyr107 together coordinate K(+). The segment at 104-109 (TIGYGN) is selectivity filter 1. An intramembrane segment occupies 104–110 (TIGYGNI). At 111–118 (VLHTDAGR) the chain is on the extracellular side. A helical transmembrane segment spans residues 119 to 151 (LFCIFYALVGIPLFGMLLAGVGDRLGSSLRRGI). Topologically, residues 152–173 (GHIEAIFLKWHVPPGLVRSLSA) are cytoplasmic. A helical transmembrane segment spans residues 174 to 195 (VLFLLIGCLLFVLTPTFVFSYM). The Extracellular portion of the chain corresponds to 196–200 (ESWSK). The segment at residues 201 to 214 (LEAIYFVIVTLTTV) is an intramembrane region (helical). Residues Thr213, Val214, Gly215, and Phe216 each coordinate K(+). Residues 213 to 218 (TVGFGD) form a selectivity filter 2 region. Residues 215 to 220 (GFGDYV) lie within the membrane without spanning it. At 221–234 (PGDGTGQNSPAYQP) the chain is on the extracellular side. The chain crosses the membrane as a helical span at residues 235–261 (LVWFWILFGLAYFASVLTTIGNWLRAV). The Cytoplasmic portion of the chain corresponds to 262–398 (SRRTRAEMGG…GRLRDKAVPV (137 aa)). The segment covering 282–292 (TVTARVTQRTG) has biased composition (polar residues). A disordered region spans residues 282–398 (TVTARVTQRT…GRLRDKAVPV (117 aa)). The span at 370–389 (PRGRRRPNPSKKPSRPRGPG) shows a compositional bias: basic residues.

This sequence belongs to the two pore domain potassium channel (TC 1.A.1.8) family. As to quaternary structure, homodimer; disulfide-linked. Forms heterodimers with other 2-pore domain K(+) channel subunits, such as KCNK2 and KCNK10. N-glycosylated. In terms of tissue distribution, expressed in brain, spinal cord and eye. Not detected in heart, skeletal muscle, liver, lungs, kidney and testis.

Its subcellular location is the cell membrane. It is found in the cell projection. It localises to the axon. It catalyses the reaction K(+)(in) = K(+)(out). It carries out the reaction Rb(+)(in) = Rb(+)(out). The catalysed reaction is Cs(+)(in) = Cs(+)(out). Its activity is regulated as follows. Activated by arachidonic acid and other polyunsaturated fatty acids. Not affected by volatile general anesthetics such as chloroform, diethyl ether, halothane and isoflurane. Activated at intracellular and extracellular basic pHs. Functionally, k(+) channel that conducts voltage-dependent outward rectifying currents upon membrane depolarization. Voltage sensing is coupled to K(+) electrochemical gradient in an 'ion flux gating' mode where outward but not inward ion flow opens the gate. Converts to voltage-independent 'leak' conductance mode upon stimulation by various stimuli including mechanical membrane stretch, basic pH, temperature and lipids. Homo- and heterodimerizes to form functional channels with distinct regulatory and gating properties. At trigeminal A-beta afferent nerves, the heterodimer of KCNK2/TREK-1 and KCNK4/TRAAK is mostly coexpressed at nodes of Ranvier where it conducts voltage-independent mechanosensitive and thermosensitive currents, allowing rapid action potential repolarization, high speed and high frequence saltatory conduction on myelinated nerves to ensure prompt sensory responses. Permeable to other monovalent cations such as Rb(+) and Cs(+). This is Potassium channel subfamily K member 4 from Mus musculus (Mouse).